Here is a 158-residue protein sequence, read N- to C-terminus: Endoribonuclease YbeY (158 aa).

Residues His117, His121, and His127 each coordinate Zn(2+).

The protein belongs to the endoribonuclease YbeY family. Zn(2+) is required as a cofactor.

The protein resides in the cytoplasm. Single strand-specific metallo-endoribonuclease involved in late-stage 70S ribosome quality control and in maturation of the 3' terminus of the 16S rRNA. The protein is Endoribonuclease YbeY of Buchnera aphidicola subsp. Schizaphis graminum (strain Sg).